A 334-amino-acid polypeptide reads, in one-letter code: MTRVLAIETSCDETACAVVEDGRRALSDVVSTQIDIHRRWGGVVPELASRNHVVQVMPVVDEALARSGVGPDGLDAVAVTSGPGLVGALLVGVQAAKALALAWGKPLVGVNHLEGHLVAAFLAEVPPAFPYLGLVVSGGHTSLYAAHGFGDYRLLGQTRDDAAGEAFDKGAKLLGLPYPGGVAIDRLAKEGDPAAIRFPKAIVKGADLDFSFSGLKTALLHHVKKHGVPEGPALADLCASYQEAIVRALVEKAFRAARRLQFERLVLAGGVAANSRLRAAATARAAEYEGMSVFIPPVRLCTDNAAMIAVAGTHALLRGERAGPDLNADPAWRL.

Residues histidine 112 and histidine 116 each contribute to the Fe cation site. Substrate-binding positions include 135–139, aspartate 168, glycine 181, aspartate 185, and asparagine 274; that span reads VVSGG. Aspartate 303 serves as a coordination point for Fe cation.

It belongs to the KAE1 / TsaD family. Fe(2+) is required as a cofactor.

It localises to the cytoplasm. The enzyme catalyses L-threonylcarbamoyladenylate + adenosine(37) in tRNA = N(6)-L-threonylcarbamoyladenosine(37) in tRNA + AMP + H(+). Required for the formation of a threonylcarbamoyl group on adenosine at position 37 (t(6)A37) in tRNAs that read codons beginning with adenine. Is involved in the transfer of the threonylcarbamoyl moiety of threonylcarbamoyl-AMP (TC-AMP) to the N6 group of A37, together with TsaE and TsaB. TsaD likely plays a direct catalytic role in this reaction. This Anaeromyxobacter dehalogenans (strain 2CP-1 / ATCC BAA-258) protein is tRNA N6-adenosine threonylcarbamoyltransferase.